The sequence spans 134 residues: Small ribosomal subunit protein uS8c (134 aa).

Belongs to the universal ribosomal protein uS8 family. In terms of assembly, part of the 30S ribosomal subunit.

Its subcellular location is the plastid. The protein resides in the chloroplast. Its function is as follows. One of the primary rRNA binding proteins, it binds directly to 16S rRNA central domain where it helps coordinate assembly of the platform of the 30S subunit. The sequence is that of Small ribosomal subunit protein uS8c (rps8) from Phaseolus vulgaris (Kidney bean).